Here is a 1350-residue protein sequence, read N- to C-terminus: Nicotinate hydroxylase hnxS (1350 aa).

Residues cysteine 49, cysteine 54, cysteine 89, cysteine 92, cysteine 133, and cysteine 135 each coordinate [2Fe-2S] cluster. The disordered stretch occupies residues 164-193; sequence LVGTEEETESDMGAHSGSGDTGSRSSGSCG. Low complexity predominate over residues 180 to 192; the sequence is GSGDTGSRSSGSC. In terms of domain architecture, FAD-binding PCMH-type spans 256–445; that stretch reads YGDAEQAWVK…TKIAVPMPSK (190 aa). FAD is bound by residues 284–291, 379–383, aspartate 392, and lysine 455; these read LVTGASEV and CLAGN. Glutamine 793 and phenylalanine 824 together coordinate Mo-molybdopterin. Substrate is bound by residues glutamate 828 and arginine 906. The Mo-molybdopterin site is built by arginine 938 and alanine 1107. Catalysis depends on glutamate 1281, which acts as the Proton acceptor.

It belongs to the xanthine dehydrogenase family. The cofactor is [2Fe-2S] cluster. Requires FAD as cofactor. Mo-molybdopterin serves as cofactor.

With respect to regulation, allopurinol inhibits catalytic activity in a linear fashion. Its function is as follows. Nicotinate hydroxylase, part of the hnx cluster involved in the purine degradation. The nicotinate hydroxylase hnxS accepts nicotinate as a substrate and catalyzes the first step of nicotinate catabolism. HnxS also accepts hypoxanthine, but not xanthine, as a substrate. The major facilitator-type transporters hxnP and hxnZ are probably involved in the uptake of nicotinate-derived metabolites, and the oxidoreductases hxnT and hxnY in the further metabolism of 6-OH nicotinic acid. This chain is Nicotinate hydroxylase hnxS, found in Emericella nidulans (strain FGSC A4 / ATCC 38163 / CBS 112.46 / NRRL 194 / M139) (Aspergillus nidulans).